Here is a 1071-residue protein sequence, read N- to C-terminus: Intracellular phospholipase A2 (1071 aa).

The tract at residues 1-22 (MTTTNKDGPFRQQYLPGVHKEP) is disordered. ANK repeat units follow at residues 411 to 440 (ENCY…TLFC), 479 to 508 (DGQS…KFTR), 510 to 539 (DRNE…EIAN), 544 to 570 (LGNS…ELGL), 578 to 610 (AGET…NMNA), 614 to 651 (HGNT…KINL), and 652 to 681 (RGES…TRCP). The PNPLA domain occupies 748 to 921 (ISMDGGGIRG…ISNNPALDLM (174 aa)). The GXGXXG motif lies at 752–757 (GGGIRG). The GXSXG signature appears at 784 to 788 (GTSTG). Ser-786 (nucleophile) is an active-site residue. Asp-908 (proton acceptor) is an active-site residue. The DGA/G motif lies at 908-910 (DGG).

Belongs to the patatin family.

It carries out the reaction a 1,2-diacyl-sn-glycero-3-phosphocholine + H2O = a 1-acyl-sn-glycero-3-phosphocholine + a fatty acid + H(+). Functionally, phospholipase that plays a critical role during oogenesis, ovulation, and/or embryogenesis. This is Intracellular phospholipase A2 from Caenorhabditis elegans.